A 357-amino-acid chain; its full sequence is Iron deficiency-induced protein A (357 aa).

The segment at residues 1–36 (MSESMFSRRDFLLGGTALAGTLLLDSFGDWRRRAEA) is a signal peptide (tat-type signal). Fe cation is bound by residues histidine 48, tyrosine 49, tyrosine 182, tyrosine 238, and tyrosine 239.

It belongs to the bacterial solute-binding protein 1 family. Post-translationally, predicted to be exported by the Tat system. The position of the signal peptide cleavage has not been experimentally proven.

The protein localises to the cellular thylakoid membrane. Its function is as follows. Plays an important role in protecting the acceptor side of photosystem II (PSII) against oxidative damage, especially under iron-limiting growth conditions. May also be part of a periplasmic ABC transporter complex involved in iron import. This is Iron deficiency-induced protein A (idiA) from Synechococcus elongatus (strain ATCC 33912 / PCC 7942 / FACHB-805) (Anacystis nidulans R2).